Here is a 61-residue protein sequence, read N- to C-terminus: Small ribosomal subunit protein uS14 (61 aa).

Zn(2+)-binding residues include C24, C27, C40, and C43.

This sequence belongs to the universal ribosomal protein uS14 family. Zinc-binding uS14 subfamily. In terms of assembly, part of the 30S ribosomal subunit. Contacts proteins S3 and S10. Requires Zn(2+) as cofactor.

Binds 16S rRNA, required for the assembly of 30S particles and may also be responsible for determining the conformation of the 16S rRNA at the A site. This Oleidesulfovibrio alaskensis (strain ATCC BAA-1058 / DSM 17464 / G20) (Desulfovibrio alaskensis) protein is Small ribosomal subunit protein uS14.